The following is a 220-amino-acid chain: Probable glutathione S-transferase parA (220 aa).

In terms of domain architecture, GST N-terminal spans 4–83 (NNVVLLDFWP…YIDEVWHDKC (80 aa)). Residues S14, K41, I55, and 67-68 (ES) contribute to the glutathione site. The GST C-terminal domain maps to 89–209 (DPYERSQARF…LPHPHKIYGF (121 aa)).

It belongs to the GST superfamily. HSP26 family.

The catalysed reaction is RX + glutathione = an S-substituted glutathione + a halide anion + H(+). This Nicotiana tabacum (Common tobacco) protein is Probable glutathione S-transferase parA (PARA).